A 351-amino-acid polypeptide reads, in one-letter code: MFRALPFTATVHPYAITAPRLVVKMSAIATKNTRVESLEVKPPAHPTYDLKGVMQLALSEDAGNLGDVTCKATIPVDMESDAHFLAKEDGIIAGIALAEMIFAEVDPSLKVEWYVNDGDKVHKGLKFGKVQGNAYNIVIAERVVLNFMQRMSGIATLTKEMADAAHPAYILETRKTAPGLRLVDKWAVLIGGGKNHRMGLFDMVMIKDNHISAAGGVGKALKSVDQYLEQNKLQIGVEVETRTIAEVREVLEYASQTKTSLTRIMLDNMVVPLSNGDIDVSMLKEAVELINGRFDTEASGNVTLETVHKIGQTGVTYISSGALTHSVKALDISLKIDTELALEVGRRTKRA.

Residues Arg-142, 173-175, Arg-197, Lys-207, Glu-240, Asp-267, 299-301, and 320-322 contribute to the substrate site; these read TRK, SGN, and SGA.

The protein belongs to the NadC/ModD family. In terms of tissue distribution, expressed in roots and flowers.

It localises to the mitochondrion. The catalysed reaction is nicotinate beta-D-ribonucleotide + CO2 + diphosphate = quinolinate + 5-phospho-alpha-D-ribose 1-diphosphate + 2 H(+). It functions in the pathway alkaloid biosynthesis; nicotine biosynthesis. It participates in cofactor biosynthesis; NAD(+) biosynthesis; nicotinate D-ribonucleotide from quinolinate: step 1/1. Its function is as follows. Involved in the biosynthesis of pyridine alkaloid natural products, leading mainly to the production of anabasine, anatabine, nicotine and nornicotine, effective deterrents against herbivores with antiparasitic and pesticide properties (neurotoxins); nornicotine serves as the precursor in the synthesis of the carcinogen compound N'-nitrosonornicotine (NNN). Involved in the catabolism of quinolinic acid (QA). The polypeptide is Quinolinate phosphoribosyltransferase [decarboxylating] 2a, mitochondrial (Nicotiana tabacum (Common tobacco)).